The sequence spans 228 residues: Ribulose-phosphate 3-epimerase, cytoplasmic isoform (228 aa).

Ser12 provides a ligand contact to substrate. A divalent metal cation contacts are provided by His37, Asp39, and His70. Catalysis depends on Asp39, which acts as the Proton acceptor. Residues His70, 150-153 (GFGG), 179-181 (DGG), and 201-202 (GS) contribute to the substrate site. Asp179 serves as a coordination point for a divalent metal cation. The Proton donor role is filled by Asp179.

Belongs to the ribulose-phosphate 3-epimerase family. Homodimer. Co(2+) serves as cofactor. Fe(2+) is required as a cofactor. It depends on Mn(2+) as a cofactor. The cofactor is Zn(2+). In terms of tissue distribution, predominantly accumulates in roots and seedlings.

Its subcellular location is the cytoplasm. The catalysed reaction is D-ribulose 5-phosphate = D-xylulose 5-phosphate. The protein operates within carbohydrate degradation; pentose phosphate pathway; D-xylulose 5-phosphate from D-ribulose 5-phosphate (non-oxidative stage): step 1/1. Its function is as follows. Catalyzes the reversible epimerization of D-ribulose 5-phosphate to D-xylulose 5-phosphate. This Oryza sativa subsp. japonica (Rice) protein is Ribulose-phosphate 3-epimerase, cytoplasmic isoform.